The chain runs to 469 residues: Tetratricopeptide repeat protein 38 (469 aa).

TPR repeat units follow at residues 107–140 (REKL…HPTD), 179–212 (SYVK…ERTD), and 251–284 (CHVY…QCFA).

This sequence belongs to the TTC38 family.

The protein is Tetratricopeptide repeat protein 38 (ttc38) of Xenopus laevis (African clawed frog).